The following is a 201-amino-acid chain: Small ribosomal subunit protein uS4c (201 aa).

The segment at 15–43 (LGALPGLTNKRPRAGSDLRNQSRSGKKSQ) is disordered. An S4 RNA-binding domain is found at 89 to 152 (MRLDNILFRL…NSRTLIQNSL (64 aa)).

Belongs to the universal ribosomal protein uS4 family. As to quaternary structure, part of the 30S ribosomal subunit. Contacts protein S5. The interaction surface between S4 and S5 is involved in control of translational fidelity.

The protein localises to the plastid. It localises to the chloroplast. In terms of biological role, one of the primary rRNA binding proteins, it binds directly to 16S rRNA where it nucleates assembly of the body of the 30S subunit. With S5 and S12 plays an important role in translational accuracy. The protein is Small ribosomal subunit protein uS4c (rps4) of Panax ginseng (Korean ginseng).